We begin with the raw amino-acid sequence, 189 residues long: Potassium-transporting ATPase KdpC subunit (189 aa).

Residues 10 to 30 (LTLVFCVFFSVCYILVLWIFA) traverse the membrane as a helical segment.

This sequence belongs to the KdpC family. The system is composed of three essential subunits: KdpA, KdpB and KdpC.

It localises to the cell inner membrane. Part of the high-affinity ATP-driven potassium transport (or Kdp) system, which catalyzes the hydrolysis of ATP coupled with the electrogenic transport of potassium into the cytoplasm. This subunit acts as a catalytic chaperone that increases the ATP-binding affinity of the ATP-hydrolyzing subunit KdpB by the formation of a transient KdpB/KdpC/ATP ternary complex. In Phocaeicola vulgatus (strain ATCC 8482 / DSM 1447 / JCM 5826 / CCUG 4940 / NBRC 14291 / NCTC 11154) (Bacteroides vulgatus), this protein is Potassium-transporting ATPase KdpC subunit.